Reading from the N-terminus, the 276-residue chain is Pantothenate synthetase (276 aa).

Residue 27 to 34 (MGNLHDGH) participates in ATP binding. Residue histidine 34 is the Proton donor of the active site. Residue glutamine 58 coordinates (R)-pantoate. Glutamine 58 contributes to the beta-alanine binding site. 145-148 (GKKD) lines the ATP pocket. Glutamine 151 lines the (R)-pantoate pocket. ATP is bound by residues isoleucine 174 and 182–185 (LSSR).

It belongs to the pantothenate synthetase family. Homodimer.

It localises to the cytoplasm. It carries out the reaction (R)-pantoate + beta-alanine + ATP = (R)-pantothenate + AMP + diphosphate + H(+). It participates in cofactor biosynthesis; (R)-pantothenate biosynthesis; (R)-pantothenate from (R)-pantoate and beta-alanine: step 1/1. Functionally, catalyzes the condensation of pantoate with beta-alanine in an ATP-dependent reaction via a pantoyl-adenylate intermediate. This Aromatoleum aromaticum (strain DSM 19018 / LMG 30748 / EbN1) (Azoarcus sp. (strain EbN1)) protein is Pantothenate synthetase.